We begin with the raw amino-acid sequence, 328 residues long: L-tyrosine isonitrile synthase (328 aa).

The protein belongs to the isocyanide synthase family. Monomer in solution.

It catalyses the reaction D-ribulose 5-phosphate + L-tyrosine = (2S)-3-(4-hydroxyphenyl)-2-isocyanopropanoate + hydroxyacetone + formaldehyde + phosphate + H2O + H(+). Its function is as follows. Involved in the biosynthesis of paerucumarin, a cyclized isocyano derivative of tyrosine. Responsible for the synthesis of the isonitrile group on tyrosine using the C2 of ribulose 5-phosphate as the source of the carbon atom. The chain is L-tyrosine isonitrile synthase from Pseudomonas aeruginosa (strain ATCC 15692 / DSM 22644 / CIP 104116 / JCM 14847 / LMG 12228 / 1C / PRS 101 / PAO1).